A 397-amino-acid chain; its full sequence is Succinyl-diaminopimelate desuccinylase (397 aa).

H73 contacts Zn(2+). D75 is an active-site residue. D106 contributes to the Zn(2+) binding site. E140 acts as the Proton acceptor in catalysis. Zn(2+) contacts are provided by E141, E169, and H366.

Belongs to the peptidase M20A family. DapE subfamily. In terms of assembly, homodimer. Zn(2+) is required as a cofactor. Requires Co(2+) as cofactor.

The enzyme catalyses N-succinyl-(2S,6S)-2,6-diaminopimelate + H2O = (2S,6S)-2,6-diaminopimelate + succinate. Its pathway is amino-acid biosynthesis; L-lysine biosynthesis via DAP pathway; LL-2,6-diaminopimelate from (S)-tetrahydrodipicolinate (succinylase route): step 3/3. In terms of biological role, catalyzes the hydrolysis of N-succinyl-L,L-diaminopimelic acid (SDAP), forming succinate and LL-2,6-diaminopimelate (DAP), an intermediate involved in the bacterial biosynthesis of lysine and meso-diaminopimelic acid, an essential component of bacterial cell walls. The protein is Succinyl-diaminopimelate desuccinylase of Rhizobium leguminosarum bv. trifolii (strain WSM2304).